Reading from the N-terminus, the 206-residue chain is Probable GTP-binding protein EngB (206 aa).

Residues 8–195 (RSDEVVLVGR…EDAVNSHFDA (188 aa)) form the EngB-type G domain. GTP contacts are provided by residues 16–23 (GRSNVGKS), 41–45 (GVTRQ), 60–63 (DLPG), 140–143 (NKMD), and 175–177 (ITA). Residues serine 23 and threonine 43 each coordinate Mg(2+).

This sequence belongs to the TRAFAC class TrmE-Era-EngA-EngB-Septin-like GTPase superfamily. EngB GTPase family. It depends on Mg(2+) as a cofactor.

In terms of biological role, necessary for normal cell division and for the maintenance of normal septation. In Halobacterium salinarum (strain ATCC 29341 / DSM 671 / R1), this protein is Probable GTP-binding protein EngB.